Consider the following 68-residue polypeptide: Neuronal regeneration-related protein (68 aa).

This chain is Neuronal regeneration-related protein (NREP), found in Gallus gallus (Chicken).